A 279-amino-acid chain; its full sequence is Glycerol uptake facilitator protein (279 aa).

At 1 to 8 (MTTAAPTP) the chain is on the cytoplasmic side. Residues 9–37 (SLFGQCLAEFLGTALLIFFGTGCVAALKV) form a helical membrane-spanning segment. At 38–42 (AGASF) the chain is on the periplasmic side. Residues 43-63 (GLWEISIIWGVGVSMAIYLSA) traverse the membrane as a helical segment. Residues 64-66 (GVS) lie on the Cytoplasmic side of the membrane. An intramembrane segment occupies 67-70 (GAHL). Residues 71-73 (NPA) carry the NPA 1 motif. The helical intramembrane region spans 71–81 (NPAVSIALWLF). The Cytoplasmic segment spans residues 82–87 (AGFEGR). Residues 88-111 (KLPFYITAQVAGAFCAAALVYTLY) traverse the membrane as a helical segment. At 112–146 (SSLFIEFEQAQNIVRGSQDSLALASVFSTYPHPAL) the chain is on the periplasmic side. The chain crosses the membrane as a helical span at residues 147–172 (SVGQAFLVEVVITAILMAVIMALTDD). Residues 173-180 (GNGLPRGP) lie on the Cytoplasmic side of the membrane. Residues 181-197 (LAPLLIGLLIAVIGSAM) traverse the membrane as a helical segment. Topologically, residues 198–201 (GPLT) are periplasmic. Residues 202-205 (GFAM) lie within the membrane without spanning it. The NPA 2 motif lies at 206-208 (NPA). The helical intramembrane region spans 206–219 (NPARDFGPKLMTYL). Over 220-234 (AGWGPIAFTGGREIP) the chain is Periplasmic. The helical transmembrane segment at 235–257 (YFLVPIFAPILGACLGAGGYRVL) threads the bilayer. Residues 258-279 (IARHLPSAAAPAEAEPEKVRAS) lie on the Cytoplasmic side of the membrane.

This sequence belongs to the MIP/aquaporin (TC 1.A.8) family.

It is found in the cell inner membrane. It catalyses the reaction glycerol(in) = glycerol(out). In terms of biological role, mediates glycerol diffusion across the cytoplasmic membrane via a pore-type mechanism. This chain is Glycerol uptake facilitator protein (glpF), found in Pseudomonas aeruginosa (strain ATCC 15692 / DSM 22644 / CIP 104116 / JCM 14847 / LMG 12228 / 1C / PRS 101 / PAO1).